We begin with the raw amino-acid sequence, 154 residues long: Putative pre-16S rRNA nuclease (154 aa).

The protein belongs to the YqgF nuclease family.

The protein resides in the cytoplasm. In terms of biological role, could be a nuclease involved in processing of the 5'-end of pre-16S rRNA. This is Putative pre-16S rRNA nuclease from Rickettsia felis (strain ATCC VR-1525 / URRWXCal2) (Rickettsia azadi).